Reading from the N-terminus, the 242-residue chain is C-reactive protein 1.1 (242 aa).

Positions 1–24 are cleaved as a signal peptide; that stretch reads MKTFHGPTCGTAVSLCLLLFLTSA. In terms of domain architecture, Pentraxin (PTX) spans 30 to 241; it reads ITSKVKFPPS…GVVLSPNEIC (212 aa). Residues Thr-60 and Tyr-63 each contribute to the phosphocholine site. Disulfide bonds link Cys-62-Cys-125 and Cys-112-Cys-144. Ca(2+) is bound by residues Asp-85 and Asn-86. An N-linked (GlcNAc...) asparagine glycan is attached at Asn-147. Ca(2+) contacts are provided by Gln-169, Asp-170, and Gln-180. Cys-207 and Cys-241 are oxidised to a cystine.

It belongs to the pentraxin family. In terms of assembly, homopentamer. Pentraxin (or pentaxin) have a discoid arrangement of 5 non-covalently bound subunits. Ca(2+) serves as cofactor.

The protein resides in the secreted. Its function is as follows. Might serve the role of immunoglobulins. In Limulus polyphemus (Atlantic horseshoe crab), this protein is C-reactive protein 1.1.